We begin with the raw amino-acid sequence, 288 residues long: MPVFAQVAHEIDIFFSFSWRDWSASIIPGSIFAVGAMRGLTLPLTTLVARYIFLVTWLTPYIYFFTLLNQVTSVDEDMINKPNRPIPSGKVTLQGAQRRSIAAFSVFLGVALYEPSLLPETLCWISTTAFLCLTSYGNHWFGKNCIAMATGAWALLSASWKAISPSTPTSDTRIYAMCGWAALTTHIQDLRDVKGDAAVGRMTLPLVFGDMGSRFIITFLALPAACCILSLGGIFQLSPITLGSLHAILGHRVLRQAGSRYDHKTYMFYTYIFCFILMLSSMDSHGLI.

Helical transmembrane passes span 24–44 (ASII…TLPL), 51–71 (YIFL…LNQV), 101–121 (IAAF…LPET), 145–165 (CIAM…AISP), 215–235 (FIIT…GGIF), and 268–288 (FYTY…HGLI).

It belongs to the UbiA prenyltransferase family. The cofactor is Mg(2+).

It localises to the membrane. Functionally, polyprenyl transferase; part of the gene cluster that mediates the biosynthesis of erinacines, cyathane-xylosides that show unique biological activities, including leishmanicidal activity, stimulating activity for nerve growth-factor synthesis, and agonistic activity toward the kappa opioid receptor. The role of eriF within the pathway has still to be determined. The first step of the erinacines biosynthesis pathway is catalyzed by the geranylgeranyl diphosphate (GGPP) synthase eriE via conversion of farnesyl pyrophosphate and isopentyl pyrophosphate into geranylgeranyl pyrophosphate (GGPP). GGPP is then substrate of the diterpene cyclase eriG for the production of cyatha-3,12-diene. The cytochrome P450 monooxygenase eriI then hydroxylates cyatha-3,12-diene at C-14 of the seven-membered ring to produce erinacol, which is further hydroxylated at C-15 by the cytochrome P450 monooxygenase eriC to yield cyathadiol. The cytochrome P450 monooxygenase eriA then catalyzes C-11 hydroxylation in the presence of the short chain dehydrogenase/reductase (SDR) eriH, which leads to the production of cyathatriol. The acetyltransferase eriL converts cyathatriol into 11-O-acetyl-cyathatriol. The SDR eriH catalyzes further oxidation of 11-O-acetyl-cyathatriol into 1-O-acetylcyathin A3. Finally, the glycosyl transferase eriJ tranfers xylose from UDP-xylose onto C-14 of 11-O-acetyl-cyathatriol to form eracine Q. EriJ is also able to convert 11-O-acetyl-cyathatriol to eracine Q2 by using UDP-D-glucose as cosubstrate, but at a lower rate. The polypeptide is Polyprenyl transferase eriF (Hericium erinaceus (Lion's mane mushroom)).